Here is a 685-residue protein sequence, read N- to C-terminus: Multicopper oxidase VdtB (685 aa).

The first 17 residues, 1-17 (MPAYLLLLACNVLLVLG), serve as a signal peptide directing secretion. Plastocyanin-like domains lie at 26 to 139 (LTWE…IRRK) and 168 to 368 (IMML…RYKN). A glycan (N-linked (GlcNAc...) asparagine) is linked at asparagine 71. Cu cation contacts are provided by histidine 75, histidine 77, histidine 119, and histidine 121. 5 N-linked (GlcNAc...) asparagine glycosylation sites follow: asparagine 178, asparagine 229, asparagine 253, asparagine 432, and asparagine 475. Positions 466-585 (DDDLIIRTQN…DNGMAMAILD (120 aa)) constitute a Plastocyanin-like 3 domain. Position 500 (histidine 500) interacts with Cu cation. The N-linked (GlcNAc...) asparagine glycan is linked to asparagine 517. A helical transmembrane segment spans residues 627–647 (SLVWAGGAAVVLLSLFIGGLW).

The protein belongs to the multicopper oxidase family.

It localises to the membrane. The enzyme catalyses 4 semiviriditoxin + O2 = 2 (M)-viriditoxin + 2 H2O. The protein operates within secondary metabolite biosynthesis. In terms of biological role, multicopper oxidase; part of the gene cluster that mediates the biosynthesis of viriditoxin, one of the 'classical' secondary metabolites produced by fungi and that has antibacterial activity. The first step is performed by the polyketide synthase VdtA which condenses one acetyl-CoA and 6 malonyl-CoA units to form the heptaketide monomer backbone of viriditoxin. The product of VdtA is then O-methylated on C7 by the O-methyltransferase VdtC. The O-methyl group is important for the stereoselective coupling of the monomers at the final step of viriditoxin biosynthesis. The short-chain dehydrogenase/reductase VdtF then acts as a stereospecific reductase converting the pyrone to dihydropyrone via the reduction of the C3-C4 double bond. The FAD-binding monooxygenase VdtE then converts the ketone group into a methyl-ester group to yield semi-viriditoxin. Finally, the laccase VdtB is involved in dimerization of 2 semi-viriditoxin molecules to yield the final viriditoxin. VdtB is responsible for the regioselective 6,6'-coupling of semi-viriditoxin, which yields (M)-viriditoxin and (P)-viriditoxin at a ratio of 1:2. The non-catalytic carboxylesterase-like protein VdtD affects the stereochemistical outcome of the coupling. The highly reducing polyketide synthase VdtX is not involved in viriditoxin synthesis, but might possibly play a role in the production of additional metabolites not identified yet. In Byssochlamys spectabilis (Paecilomyces variotii), this protein is Multicopper oxidase VdtB.